A 247-amino-acid polypeptide reads, in one-letter code: ATP synthase subunit a, chloroplastic (247 aa).

The next 5 membrane-spanning stretches (helical) occupy residues 38–58 (QVLI…IIAV), 95–115 (VPFI…GALL), 134–154 (INTT…AGLT), 199–219 (LVVV…VMFL), and 220–240 (GLFT…AYIG).

This sequence belongs to the ATPase A chain family. F-type ATPases have 2 components, CF(1) - the catalytic core - and CF(0) - the membrane proton channel. CF(1) has five subunits: alpha(3), beta(3), gamma(1), delta(1), epsilon(1). CF(0) has four main subunits: a, b, b' and c.

The protein localises to the plastid. It is found in the chloroplast thylakoid membrane. In terms of biological role, key component of the proton channel; it plays a direct role in the translocation of protons across the membrane. This chain is ATP synthase subunit a, chloroplastic, found in Carica papaya (Papaya).